The primary structure comprises 120 residues: Large ribosomal subunit protein uL18 (120 aa).

This sequence belongs to the universal ribosomal protein uL18 family. Part of the 50S ribosomal subunit; part of the 5S rRNA/L5/L18/L25 subcomplex. Contacts the 5S and 23S rRNAs.

Its function is as follows. This is one of the proteins that bind and probably mediate the attachment of the 5S RNA into the large ribosomal subunit, where it forms part of the central protuberance. This is Large ribosomal subunit protein uL18 from Rhizobium meliloti (strain 1021) (Ensifer meliloti).